Reading from the N-terminus, the 336-residue chain is 3-isopropylmalate dehydrogenase (336 aa).

Substrate contacts are provided by Arg-87, Arg-97, Arg-121, and Asp-211. 3 residues coordinate Mg(2+): Asp-211, Asp-235, and Asp-239. Residue 271-283 (GSAPDIAGQGIAD) coordinates NAD(+).

This sequence belongs to the isocitrate and isopropylmalate dehydrogenases family. LeuB type 2 subfamily. Homodimer. Requires Mg(2+) as cofactor. The cofactor is Mn(2+).

The protein resides in the cytoplasm. The catalysed reaction is (2R,3S)-3-isopropylmalate + NAD(+) = 4-methyl-2-oxopentanoate + CO2 + NADH. It participates in amino-acid biosynthesis; L-leucine biosynthesis; L-leucine from 3-methyl-2-oxobutanoate: step 3/4. Functionally, catalyzes the oxidation of 3-carboxy-2-hydroxy-4-methylpentanoate (3-isopropylmalate) to 3-carboxy-4-methyl-2-oxopentanoate. The product decarboxylates to 4-methyl-2 oxopentanoate. This Mycolicibacterium paratuberculosis (strain ATCC BAA-968 / K-10) (Mycobacterium paratuberculosis) protein is 3-isopropylmalate dehydrogenase.